Reading from the N-terminus, the 335-residue chain is Serpentine receptor class XA 10 (335 aa).

Residues methionine 1–arginine 10 are Extracellular-facing. A helical membrane pass occupies residues isoleucine 11–serine 31. Over leucine 32 to tyrosine 46 the chain is Cytoplasmic. Residues isoleucine 47–leucine 67 traverse the membrane as a helical segment. Topologically, residues proline 68 to serine 82 are extracellular. The chain crosses the membrane as a helical span at residues isoleucine 83 to isoleucine 103. Residues leucine 104–lysine 126 are Cytoplasmic-facing. The chain crosses the membrane as a helical span at residues isoleucine 127–leucine 147. Topologically, residues serine 148–asparagine 177 are extracellular. Residues tyrosine 178–phenylalanine 198 traverse the membrane as a helical segment. Residues lysine 199–methionine 238 lie on the Cytoplasmic side of the membrane. Residues leucine 239–valine 259 form a helical membrane-spanning segment. Over leucine 260 to leucine 276 the chain is Extracellular. Residues alanine 277–phenylalanine 297 traverse the membrane as a helical segment. Over threonine 298–alanine 319 the chain is Cytoplasmic.

Belongs to the nematode receptor-like protein srxa family.

It is found in the membrane. This chain is Serpentine receptor class XA 10 (srxa-10), found in Caenorhabditis elegans.